The following is a 187-amino-acid chain: Large ribosomal subunit protein uL5 (187 aa).

The protein belongs to the universal ribosomal protein uL5 family. As to quaternary structure, part of the 50S ribosomal subunit; part of the 5S rRNA/L5/L18/L25 subcomplex. Contacts the 5S rRNA and the P site tRNA. Forms a bridge to the 30S subunit in the 70S ribosome.

In terms of biological role, this is one of the proteins that bind and probably mediate the attachment of the 5S RNA into the large ribosomal subunit, where it forms part of the central protuberance. In the 70S ribosome it contacts protein S13 of the 30S subunit (bridge B1b), connecting the 2 subunits; this bridge is implicated in subunit movement. Contacts the P site tRNA; the 5S rRNA and some of its associated proteins might help stabilize positioning of ribosome-bound tRNAs. This is Large ribosomal subunit protein uL5 from Mycobacteroides abscessus (strain ATCC 19977 / DSM 44196 / CCUG 20993 / CIP 104536 / JCM 13569 / NCTC 13031 / TMC 1543 / L948) (Mycobacterium abscessus).